The sequence spans 917 residues: MTDETVKSLAEEIQTPVERLVQQFADAGIEKTVSDSVSQKEKETLLAWLNRDKDISTGQPSKLTLQRKVRSTLSVPGTGGKSKSVAIEVRKKRTYVNRDVIEKSQAEEQALREAEEKAHREVEEKAQREAQEKAQRAAEEKAKREAQEAKKQAEEKAKREAEEAKREAAELAKREAAEKNKVKQNDKPKADVADQDKARRNAELAELKRKTEEAQRLKVEEETRAAAEKARRLAEENAEKWTAEPKAPETESADYHVTTSRYARDAEDESDAEVEGDRRRGRTAKAPRAKKNNRHSEKADREEARAAGRSNKKGKRKSSTLQQGFHKPAVAVNRDVIIGETISVAELANKMAVKGSEVIKTMMKMGAMATINQVLDQETAQLVAEEMGHKVILRRENELEEQVMNDRDTGEESEVSRAPVVTIMGHVDHGKTSLLDYIRSTKVASGEAGGITQHIGAYHVKTDKGEITFLDTPGHAAFTSMRARGAQVTDIVVLVVAADDGVMPQTIEAIQHAKAANVPVVVAVNKIDKHEADPDRVKTELSQYGILSEDWGGETQFMHVSAKQGLGIDELLDAILLQAEVLELKAVKEGMASGVVIESYLDKGRGPVATILVREGTLNKGDIVLCGFEYGRIRAMRNELGQEVQSAGPSMPVEILGLSNVPSAGDEATVVRDEKKAREVALYRQGKFREVKLARQQKSKLENMFANMEEGKVSELNIVLKTDVQGTCEAITDALVKLSTDEVKLRIIGSGVGGITETDATLAAASEAIILGFNVRADASARRIIEQESVDLRYYSVIYSLIDEIKLAMSGMLAPEYKQEIMGLAEVRDVFKSPKFGAVAGCMVVEGNIKRNNPIRVLRDNVVIYEGELESLRRFKDDVNEVRNGMECGIGVKNYNDVRVGDMIEVFQVIEIKRSIA.

The segment covering 102–249 (EKSQAEEQAL…KWTAEPKAPE (148 aa)) has biased composition (basic and acidic residues). The segment at 102-326 (EKSQAEEQAL…KSSTLQQGFH (225 aa)) is disordered. Residues 279–293 (RRGRTAKAPRAKKNN) show a composition bias toward basic residues. Positions 294–306 (RHSEKADREEARA) are enriched in basic and acidic residues. Residues 416 to 585 (SRAPVVTIMG…LLQAEVLELK (170 aa)) enclose the tr-type G domain. The segment at 425-432 (GHVDHGKT) is G1. GTP is bound at residue 425–432 (GHVDHGKT). The segment at 450–454 (GITQH) is G2. The segment at 471–474 (DTPG) is G3. GTP contacts are provided by residues 471–475 (DTPGH) and 525–528 (NKID). Residues 525–528 (NKID) are G4. Positions 561-563 (SAK) are G5.

Belongs to the TRAFAC class translation factor GTPase superfamily. Classic translation factor GTPase family. IF-2 subfamily.

The protein resides in the cytoplasm. Functionally, one of the essential components for the initiation of protein synthesis. Protects formylmethionyl-tRNA from spontaneous hydrolysis and promotes its binding to the 30S ribosomal subunits. Also involved in the hydrolysis of GTP during the formation of the 70S ribosomal complex. The chain is Translation initiation factor IF-2 (infB) from Proteus vulgaris.